A 323-amino-acid chain; its full sequence is Aldo-keto reductase family 1 member C3 (323 aa).

NADP(+) is bound by residues 20 to 24 and D50; that span reads GFGTY. Residue Y55 is the Proton donor of the active site. H117 provides a ligand contact to substrate. Residues 166 to 167, Q190, 216 to 221, and 270 to 280 contribute to the NADP(+) site; these read SN, YSALGS, and KSYNEQRIREN.

Belongs to the aldo/keto reductase family.

The protein resides in the cytoplasm. The catalysed reaction is a 3alpha-hydroxysteroid + NADP(+) = a 3-oxosteroid + NADPH + H(+). It catalyses the reaction a 3alpha-hydroxysteroid + NAD(+) = a 3-oxosteroid + NADH + H(+). It carries out the reaction prostaglandin F2alpha + NADP(+) = prostaglandin D2 + NADPH + H(+). The enzyme catalyses testosterone + NAD(+) = androst-4-ene-3,17-dione + NADH + H(+). The catalysed reaction is testosterone + NADP(+) = androst-4-ene-3,17-dione + NADPH + H(+). It catalyses the reaction prostaglandin F2alpha + NADP(+) = prostaglandin H2 + NADPH + H(+). It carries out the reaction prostaglandin D2 + NADPH + H(+) = 11beta-prostaglandin F2 + NADP(+). The enzyme catalyses prostaglandin D2-ethanolamide + NADPH + H(+) = 11beta-prostaglandin F2-ethanolamide + NADP(+). The catalysed reaction is 17beta-estradiol + NADP(+) = estrone + NADPH + H(+). It catalyses the reaction 17beta-estradiol + NAD(+) = estrone + NADH + H(+). It carries out the reaction (20S)-hydroxypregn-4-en-3-one + NADP(+) = progesterone + NADPH + H(+). The enzyme catalyses (20S)-hydroxypregn-4-en-3-one + NAD(+) = progesterone + NADH + H(+). The catalysed reaction is 5alpha-androstane-3alpha,17beta-diol + NADP(+) = 17beta-hydroxy-5alpha-androstan-3-one + NADPH + H(+). It catalyses the reaction 5alpha-androstane-3alpha,17beta-diol + NAD(+) = 17beta-hydroxy-5alpha-androstan-3-one + NADH + H(+). It carries out the reaction androsterone + NADPH + H(+) = 5alpha-androstane-3alpha,17beta-diol + NADP(+). The enzyme catalyses 5alpha-androstane-3alpha,17beta-diol + NAD(+) = androsterone + NADH + H(+). The catalysed reaction is 5alpha-androstane-3beta,17beta-diol + NADP(+) = 17beta-hydroxy-5alpha-androstan-3-one + NADPH + H(+). It catalyses the reaction 9-cis-retinol + NADP(+) = 9-cis-retinal + NADPH + H(+). It functions in the pathway steroid metabolism. Functionally, cytosolic aldo-keto reductase that catalyzes the NADH and NADPH-dependent reduction of ketosteroids to hydroxysteroids. Acts as a NAD(P)(H)-dependent 3-, 17- and 20-ketosteroid reductase on the steroid nucleus and side chain and regulates the metabolism of androgens, estrogens and progesterone. Displays the ability to catalyze both oxidation and reduction in vitro, but most probably acts as a reductase in vivo since the oxidase activity measured in vitro is inhibited by physiological concentration of NADPH. Acts preferentially as a 17-ketosteroid reductase and has the highest catalytic efficiency of the AKR1C enzyme for the reduction of delta4-androstenedione to form testosterone. Reduces prostaglandin (PG) D2 to 11beta-prostaglandin F2, progesterone to 20alpha-hydroxyprogesterone and estrone to 17beta-estradiol. Catalyzes the transformation of the potent androgen dihydrotestosterone (DHT) into the less active form, 5-alpha-androstan-3-alpha,17-beta-diol (3-alpha-diol). Also displays retinaldehyde reductase activity toward 9-cis-retinal. The polypeptide is Aldo-keto reductase family 1 member C3 (AKR1C3) (Pongo abelii (Sumatran orangutan)).